We begin with the raw amino-acid sequence, 1268 residues long: Neurocan core protein (1268 aa).

An N-terminal signal peptide occupies residues Met1 to Gly22. The Ig-like V-type domain occupies Arg37–Thr157. Intrachain disulfides connect Cys58-Cys139, Cys181-Cys252, Cys205-Cys226, Cys279-Cys354, and Cys303-Cys324. N-linked (GlcNAc...) asparagine glycosylation occurs at Asn121. Link domains lie at Val159 to Ala254 and Gly258 to Arg356. Asn339 is a glycosylation site (N-linked (GlcNAc...) asparagine). Disordered stretches follow at residues Gln363–Pro391, Pro406–Ser442, Pro472–His540, and Ile574–Ser630. O-linked (Xyl...) (chondroitin sulfate) serine glycans are attached at residues Ser380 and Ser410. Positions Thr419 to Ser430 are enriched in polar residues. The span at Ser575 to Pro585 shows a compositional bias: low complexity. Pro residues predominate over residues Pro608–Gly617. Residues Pro618–Ser630 show a composition bias toward low complexity. N-linked (GlcNAc...) asparagine glycosylation occurs at Asn742. Residues Pro960–Glu996 enclose the EGF-like 1 domain. 11 disulfide bridges follow: Cys964-Cys975, Cys969-Cys984, Cys986-Cys995, Cys1002-Cys1013, Cys1007-Cys1022, Cys1024-Cys1033, Cys1040-Cys1051, Cys1068-Cys1160, Cys1136-Cys1152, Cys1167-Cys1210, and Cys1196-Cys1223. Asn978 carries an N-linked (GlcNAc...) asparagine glycan. The region spanning Asp998 to Glu1034 is the EGF-like 2; calcium-binding domain. In terms of domain architecture, C-type lectin spans Asp1036–Val1165. Positions Val1165–Lys1225 constitute a Sushi domain. The N-linked (GlcNAc...) asparagine glycan is linked to Asn1175. The segment covering Arg1228–His1255 has biased composition (basic residues). The segment at Arg1228 to Cys1268 is disordered.

This sequence belongs to the aggrecan/versican proteoglycan family. In terms of processing, O-glycosylated; contains chondroitin sulfate. Brain.

Its subcellular location is the secreted. In terms of biological role, may modulate neuronal adhesion and neurite growth during development by binding to neural cell adhesion molecules (NG-CAM and N-CAM). Chondroitin sulfate proteoglycan; binds to hyaluronic acid. The protein is Neurocan core protein (Ncan) of Mus musculus (Mouse).